Reading from the N-terminus, the 360-residue chain is Protein Wnt-2 (360 aa).

The N-terminal stretch at 1 to 25 is a signal peptide; it reads MNAPLGGIWLWLPLLLTWLTPEVNS. Cystine bridges form between Cys-76–Cys-87, Cys-127–Cys-135, Cys-137–Cys-157, Cys-206–Cys-220, Cys-208–Cys-215, Cys-278–Cys-309, Cys-294–Cys-304, Cys-308–Cys-348, Cys-324–Cys-339, Cys-326–Cys-336, and Cys-331–Cys-332. Ser-212 carries the O-palmitoleoyl serine; by PORCN lipid modification. N-linked (GlcNAc...) asparagine glycosylation is present at Asn-295.

It belongs to the Wnt family. In terms of processing, palmitoleoylation is required for efficient binding to frizzled receptors. Depalmitoleoylation leads to Wnt signaling pathway inhibition. In terms of tissue distribution, expressed in brain in the thalamus, in fetal and adult lung and in placenta.

It localises to the secreted. Its subcellular location is the extracellular space. The protein localises to the extracellular matrix. Ligand for members of the frizzled family of seven transmembrane receptors. Functions in the canonical Wnt signaling pathway that results in activation of transcription factors of the TCF/LEF family. Functions as a upstream regulator of FGF10 expression. Plays an important role in embryonic lung development. May contribute to embryonic brain development by regulating the proliferation of dopaminergic precursors and neurons. This Homo sapiens (Human) protein is Protein Wnt-2 (WNT2).